The following is a 192-amino-acid chain: MPEGEMMHKLQDIIDRKLLDSRRIFFSEPVTEKSAAEAIKKLWYLELTSPGQPIVFVINSPGGSVDAGFAVWDQIKMISSPVTTVVTGLAASMGSVLSLCAAPGRRFATPHARIMIHQPSIGGTITGQATDLDIHAREILKTKARIIDVYVEATGQSREVIEKAIDRDMWMSANEAMEFGLLDGILFSFNDL.

Residue Ser92 is the Nucleophile of the active site. The active site involves His117.

It belongs to the peptidase S14 family. Fourteen ClpP subunits assemble into 2 heptameric rings which stack back to back to give a disk-like structure with a central cavity, resembling the structure of eukaryotic proteasomes.

It localises to the cytoplasm. The catalysed reaction is Hydrolysis of proteins to small peptides in the presence of ATP and magnesium. alpha-casein is the usual test substrate. In the absence of ATP, only oligopeptides shorter than five residues are hydrolyzed (such as succinyl-Leu-Tyr-|-NHMec, and Leu-Tyr-Leu-|-Tyr-Trp, in which cleavage of the -Tyr-|-Leu- and -Tyr-|-Trp bonds also occurs).. Functionally, cleaves peptides in various proteins in a process that requires ATP hydrolysis. Has a chymotrypsin-like activity. Plays a major role in the degradation of misfolded proteins. In Chlamydia muridarum (strain MoPn / Nigg), this protein is ATP-dependent Clp protease proteolytic subunit 1.